Consider the following 882-residue polypeptide: Ubiquitin carboxyl-terminal hydrolase 4 (882 aa).

The 127-residue stretch at 182 to 308 (YDSSLLLIDV…WVSKKGACET (127 aa)) folds into the Rhodanese domain. The segment covering 382–399 (KAKSSSTSSVTSSSPAPS) has biased composition (low complexity). A disordered region spans residues 382-411 (KAKSSSTSSVTSSSPAPSQLVRPQTSSMPP). Residues 402–411 (VRPQTSSMPP) are compositionally biased toward polar residues. Residues 519-879 (VGLENMGNSC…NAYVLFYHRV (361 aa)) enclose the USP domain. C528 acts as the Nucleophile in catalysis. Catalysis depends on H836, which acts as the Proton acceptor.

This sequence belongs to the peptidase C19 family.

The protein localises to the cytoplasm. The protein resides in the late endosome membrane. It catalyses the reaction Thiol-dependent hydrolysis of ester, thioester, amide, peptide and isopeptide bonds formed by the C-terminal Gly of ubiquitin (a 76-residue protein attached to proteins as an intracellular targeting signal).. Its activity is regulated as follows. RFU1 is an inhibitor of deubiquitination activity. In terms of biological role, ubiquitin thioesterase that acts at the late endosome/prevacuolar compartment to recover ubiquitin from ubiquitinated membrane proteins en route to the vacuole. Also removes ubiquitin from soluble proteins targeted to proteasomes. Is essential to maintain a normal level of free ubiquitin. Required for promoting coordination of DNA replication and avoids DNA overreplication. This chain is Ubiquitin carboxyl-terminal hydrolase 4 (DOA4), found in Vanderwaltozyma polyspora (strain ATCC 22028 / DSM 70294 / BCRC 21397 / CBS 2163 / NBRC 10782 / NRRL Y-8283 / UCD 57-17) (Kluyveromyces polysporus).